The primary structure comprises 198 residues: Recombination protein RecR (198 aa).

The C4-type zinc-finger motif lies at C56–C71. The 96-residue stretch at R79–P174 folds into the Toprim domain.

Belongs to the RecR family.

May play a role in DNA repair. It seems to be involved in an RecBC-independent recombinational process of DNA repair. It may act with RecF and RecO. In Sphingopyxis alaskensis (strain DSM 13593 / LMG 18877 / RB2256) (Sphingomonas alaskensis), this protein is Recombination protein RecR.